A 170-amino-acid polypeptide reads, in one-letter code: Cyclic dof factor 4 (170 aa).

A disordered region spans residues 25-51; sequence NEEETHPPEQEATIAVRSSSSSDLTAE. The Dof-type zinc-finger motif lies at 58-112; the sequence is IACPRCKSMETKFCYFNNYNVNQPRHFCKGCHRYWTAGGALRNVPVGAGRRKSKP. Residues cysteine 60, cysteine 63, cysteine 85, and cysteine 88 each coordinate Zn(2+).

Expressed in the vasculature of cotyledons and hypocotyls, leaves and roots.

The protein localises to the nucleus. In terms of biological role, transcription factor that binds specifically to a 5'-AA[AG]G-3' consensus core sequence. Transcriptional repressor of 'CONSTANS' expression. Regulates a photoperiodic flowering response. This chain is Cyclic dof factor 4 (CDF4), found in Arabidopsis thaliana (Mouse-ear cress).